Here is a 476-residue protein sequence, read N- to C-terminus: Monofunctional riboflavin biosynthesis protein RIBA 2, chloroplastic (476 aa).

A chloroplast-targeting transit peptide spans 1-54 (MASLTLRCDSTHLLPSRDVVKGTKPFGTSLVYPRIISKKFNVRMRVIPEEGDVF). A DHBP synthase region spans residues 44 to 306 (MRVIPEEGDV…IADLIRYRRK (263 aa)). D-ribulose 5-phosphate is bound by residues 130-131 (RE), D135, 245-249 (RAGHT), and E269. E131 lines the Mg(2+) pocket. H248 contributes to the Mg(2+) binding site. Residues 307–476 (RERLVEFTAV…SGKVPLITTP (170 aa)) form an inactive GTP cyclohydrolase II region. Residues 357-361 (RVHAE), Q376, 399-401 (ESK), and T450 each bind GTP.

It in the N-terminal section; belongs to the DHBP synthase family. The protein in the C-terminal section; belongs to the GTP cyclohydrolase II family. Requires Mg(2+) as cofactor. The cofactor is Mn(2+). Expressed in leaves, shoots, roots, flowers and siliques.

It localises to the plastid. The protein localises to the chloroplast. It catalyses the reaction D-ribulose 5-phosphate = (2S)-2-hydroxy-3-oxobutyl phosphate + formate + H(+). The protein operates within cofactor biosynthesis; riboflavin biosynthesis; 2-hydroxy-3-oxobutyl phosphate from D-ribulose 5-phosphate: step 1/1. Involved in riboflavin biosynthesis. Catalyzes the conversion of D-ribulose 5-phosphate to formate and 3,4-dihydroxy-2-butanone 4-phosphate. RIBA2 and RIBA3 together are not able to complement the loss of function of RIBA1. This is Monofunctional riboflavin biosynthesis protein RIBA 2, chloroplastic (RIBA2) from Arabidopsis thaliana (Mouse-ear cress).